The primary structure comprises 92 residues: Small ribosomal subunit protein uS19 (92 aa).

Belongs to the universal ribosomal protein uS19 family.

In terms of biological role, protein S19 forms a complex with S13 that binds strongly to the 16S ribosomal RNA. The sequence is that of Small ribosomal subunit protein uS19 from Nostoc punctiforme (strain ATCC 29133 / PCC 73102).